We begin with the raw amino-acid sequence, 206 residues long: Hypoxanthine-guanine phosphoribosyltransferase (206 aa).

GMP-binding positions include 110-118, Lys-154, and 181-187; these read DEVDDTRTT and WIMYPWE. Asp-114 (proton acceptor) is an active-site residue.

Belongs to the purine/pyrimidine phosphoribosyltransferase family. Dimer. Mg(2+) is required as a cofactor.

It is found in the endoplasmic reticulum. The catalysed reaction is IMP + diphosphate = hypoxanthine + 5-phospho-alpha-D-ribose 1-diphosphate. It carries out the reaction GMP + diphosphate = guanine + 5-phospho-alpha-D-ribose 1-diphosphate. In terms of biological role, converts guanine to guanosine monophosphate, and hypoxanthine to inosine monophosphate. Transfers the 5-phosphoribosyl group from 5-phosphoribosylpyrophosphate onto the purine. Plays a central role in the generation of purine nucleotides through the purine salvage pathway. This is Hypoxanthine-guanine phosphoribosyltransferase (hpt1) from Schizosaccharomyces pombe (strain 972 / ATCC 24843) (Fission yeast).